A 162-amino-acid chain; its full sequence is Podoplanin (162 aa).

The signal sequence occupies residues 1-22; the sequence is MWKVSALLFVLGSASLWVLAEG. The disordered stretch occupies residues 23-57; the sequence is ASTGQPEDDTETTGLEGGVAMPGAEDDVVTPGTSE. Residues 23 to 131 lie on the Extracellular side of the membrane; sequence ASTGQPEDDT…EKDGLSTVTL (109 aa). O-linked (GalNAc...) threonine glycans are attached at residues Thr25, Thr32, Thr34, Thr35, Thr52, Thr55, Thr65, Thr66, Thr76, and Thr85. Over residues 85-108 the composition is skewed to polar residues; the sequence is TSESTVHAQEQSPSATASNVATSH. Residues 85-119 form a disordered region; it reads TSESTVHAQEQSPSATASNVATSHSTEKVDGDTQT. O-linked (GalNAc...) serine glycosylation is found at Ser86 and Ser88. A glycan (O-linked (GalNAc...) threonine) is linked at Thr89. O-linked (GalNAc...) serine glycosylation is found at Ser96 and Ser98. Residue Thr100 is glycosylated (O-linked (GalNAc...) threonine). Ser102 carries O-linked (GalNAc...) serine glycosylation. Thr106 carries O-linked (GalNAc...) threonine glycosylation. O-linked (GalNAc...) serine glycosylation is found at Ser107 and Ser109. Residues 109-119 are compositionally biased toward basic and acidic residues; it reads STEKVDGDTQT. Residues Thr110, Thr117, Thr119, and Thr120 are each glycosylated (O-linked (GalNAc...) threonine). Residues 132–152 traverse the membrane as a helical segment; sequence VGIIVGVLLAIGFIGAIIVVV. Residues 133 to 137 are requires for dimerization and lipid rafts association; it reads GIIVG. Residues 153–162 are Cytoplasmic-facing; sequence MRKMSGRYSP. Residues 154-155 form a requires for interaction with MSN and EZR region; sequence RK.

It belongs to the podoplanin family. Homodimer. Interacts with CLEC1B; the interaction is independent of CLEC1B glycosylation and activates CLEC1B; the interaction is dependent of sialic acid on O-glycans. Interacts with CD9; this interaction is homophilic and attenuates platelet aggregation and pulmonary metastasis induced by PDPN. Interacts with LGALS8; the interaction is glycosylation-dependent; may participate in connection of the lymphatic endothelium to the surrounding extracellular matrix. Interacts with HSPA9. Interacts (via extracellular domain) with CD44; this interaction is required for PDPN-mediated directional migration and regulation of lamellipodia extension/stabilization during cell spreading and migration. Interacts (via cytoplasmic domain) with MSN and EZR; activates RHOA and promotes epithelial-mesenchymal transition. Interacts with CCL21; relocalized PDPN to the basolateral membrane. In terms of processing, extensively O-glycosylated. Contains sialic acid residues. O-glycosylation is necessary for platelet aggregation activity. Disialylated at Thr-52; sialic acid is critical for platelet-aggregating activity and for CLEC1B interaction. Post-translationally, the N-terminus is blocked. Cleaved by a metalloprotease within its extracellular (EC) domain, generating a membrane-bound C-terminal fragment (PCTF33) and an extracellular fragment. The resulting membrane-bound C-terminal fragment (PCTF33) is further processed between Val-150 and Val-151 by PSEN1/gamma-secretase generating the intracellular domain of podoplanin (PICD). In terms of tissue distribution, highly expressed in placenta, lung, skeletal muscle and brain. Weakly expressed in brain, kidney and liver. In placenta, expressed on the apical plasma membrane of endothelium. In lung, expressed in alveolar epithelium. Up-regulated in colorectal tumors and expressed in 25% of early oral squamous cell carcinomas.

It localises to the membrane. Its subcellular location is the cell projection. The protein resides in the lamellipodium membrane. It is found in the filopodium membrane. The protein localises to the microvillus membrane. It localises to the ruffle membrane. Its subcellular location is the membrane raft. The protein resides in the apical cell membrane. It is found in the basolateral cell membrane. The protein localises to the invadopodium. It localises to the cytoplasm. Its subcellular location is the cytosol. Functionally, mediates effects on cell migration and adhesion through its different partners. During development plays a role in blood and lymphatic vessels separation by binding CLEC1B, triggering CLEC1B activation in platelets and leading to platelet activation and/or aggregation. Interaction with CD9, on the contrary, attenuates platelet aggregation induced by PDPN. Through MSN or EZR interaction promotes epithelial-mesenchymal transition (EMT) leading to ERZ phosphorylation and triggering RHOA activation leading to cell migration increase and invasiveness. Interaction with CD44 promotes directional cell migration in epithelial and tumor cells. In lymph nodes (LNs), controls fibroblastic reticular cells (FRCs) adhesion to the extracellular matrix (ECM) and contraction of the actomyosin by maintaining ERM proteins (EZR; MSN and RDX) and MYL9 activation through association with unknown transmembrane proteins. Engagement of CLEC1B by PDPN promotes FRCs relaxation by blocking lateral membrane interactions leading to reduction of ERM proteins (EZR; MSN and RDX) and MYL9 activation. Through binding with LGALS8 may participate in connection of the lymphatic endothelium to the surrounding extracellular matrix. In keratinocytes, induces changes in cell morphology showing an elongated shape, numerous membrane protrusions, major reorganization of the actin cytoskeleton, increased motility and decreased cell adhesion. Controls invadopodia stability and maturation leading to efficient degradation of the extracellular matrix (ECM) in tumor cells through modulation of RHOC activity in order to activate ROCK1/ROCK2 and LIMK1/LIMK2 and inactivation of CFL1. Required for normal lung cell proliferation and alveolus formation at birth. Does not function as a water channel or as a regulator of aquaporin-type water channels. Does not have any effect on folic acid or amino acid transport. The polypeptide is Podoplanin (Homo sapiens (Human)).